We begin with the raw amino-acid sequence, 475 residues long: Putative aldehyde dehydrogenase (475 aa).

Residues 146-147 and 223-224 contribute to the NAD(+) site; these read WN and GS. Glu245 (proton acceptor) is an active-site residue. Residue Leu246 coordinates NAD(+). Cys279 serves as the catalytic Nucleophile. Glu379 contributes to the NAD(+) binding site.

The protein belongs to the aldehyde dehydrogenase family.

It catalyses the reaction an aldehyde + NAD(+) + H2O = a carboxylate + NADH + 2 H(+). This Staphylococcus aureus (strain bovine RF122 / ET3-1) protein is Putative aldehyde dehydrogenase.